The chain runs to 107 residues: EIVLTQSPAITAASLGQKVTITCSASSSVSYMHWYQQKSGTSPKPWIYEISKLASGVPARFSGSGSGTSYSLTISSMEAEDAAIYYCQQWNYPLITFGSGTKLEIKR.

The segment at 1 to 23 is framework-1; the sequence is EIVLTQSPAITAASLGQKVTITC. Cys23 and Cys87 are joined by a disulfide. Residues 24 to 33 form a complementarity-determining-1 region; it reads SASSSVSYMH. Residues 34-48 are framework-2; that stretch reads WYQQKSGTSPKPWIY. The segment at 49 to 55 is complementarity-determining-2; sequence EISKLAS. The segment at 56 to 87 is framework-3; it reads GVPARFSGSGSGTSYSLTISSMEAEDAAIYYC. Residues 88–96 are complementarity-determining-3; sequence QQWNYPLIT. The segment at 97-106 is framework-4; sequence FGSGTKLEIK.

In Mus musculus (Mouse), this protein is Ig kappa chain V-VI region XRPC 24.